A 483-amino-acid polypeptide reads, in one-letter code: Cobyric acid synthase (483 aa).

One can recognise a GATase cobBQ-type domain in the interval 252 to 430 (ALQVVAVAYP…LHRLFDSGPF (179 aa)). Residue cysteine 333 is the Nucleophile of the active site. Residue histidine 422 is part of the active site.

This sequence belongs to the CobB/CobQ family. CobQ subfamily.

It functions in the pathway cofactor biosynthesis; adenosylcobalamin biosynthesis. In terms of biological role, catalyzes amidations at positions B, D, E, and G on adenosylcobyrinic A,C-diamide. NH(2) groups are provided by glutamine, and one molecule of ATP is hydrogenolyzed for each amidation. The sequence is that of Cobyric acid synthase from Halorhodospira halophila (strain DSM 244 / SL1) (Ectothiorhodospira halophila (strain DSM 244 / SL1)).